A 266-amino-acid chain; its full sequence is Probable septum site-determining protein MinC (266 aa).

Residues 1–21 (MSEAESTPVEEPVVESTEGSE) are compositionally biased toward low complexity. The tract at residues 1 to 28 (MSEAESTPVEEPVVESTEGSEAIPEVEQ) is disordered.

Belongs to the MinC family. Interacts with MinD and FtsZ.

In terms of biological role, cell division inhibitor that blocks the formation of polar Z ring septums. Rapidly oscillates between the poles of the cell to destabilize FtsZ filaments that have formed before they mature into polar Z rings. Prevents FtsZ polymerization. The protein is Probable septum site-determining protein MinC of Thermosynechococcus vestitus (strain NIES-2133 / IAM M-273 / BP-1).